The primary structure comprises 309 residues: Prepilin leader peptidase/N-methyltransferase (309 aa).

The chain crosses the membrane as a helical span at residues 35-55 (MQLAFAIVLGLVVGSFINVVV). Zn(2+) is bound by residues cysteine 96, cysteine 99, cysteine 121, and cysteine 124. 6 consecutive transmembrane segments (helical) span residues 147-167 (LALFGPSGAALAAFGLCAALL), 183-203 (LTLPLLWAGLCVNLWGTFASL), 207-227 (VIGAIAGYLFLWCILWLFKLL), 230-250 (IEGIGYGDLKLLAALGAWLGW), 253-273 (LPQVVLIAAVAGAAVGLVATW), and 288-308 (FLAAGGAATLFFGTPFYLLLG).

Belongs to the peptidase A24 family. Zn(2+) serves as cofactor.

The protein localises to the cell inner membrane. It carries out the reaction Typically cleaves a -Gly-|-Phe- bond to release an N-terminal, basic peptide of 5-8 residues from type IV prepilin, and then N-methylates the new N-terminal amino group, the methyl donor being S-adenosyl-L-methionine.. Its function is as follows. Plays an essential role in type IV pili and type II pseudopili formation by proteolytically removing the leader sequence from substrate proteins and subsequently monomethylating the alpha-amino group of the newly exposed N-terminal phenylalanine. The chain is Prepilin leader peptidase/N-methyltransferase (gspO) from Burkholderia pseudomallei (strain K96243).